A 263-amino-acid chain; its full sequence is Reductase pytE (263 aa).

It belongs to the avfA family.

The protein operates within secondary metabolite biosynthesis. In terms of biological role, reductase; part of the gene cluster that mediates the biosynthesis of pyranterreones, a family of antioxidative compounds. The first step of pyranonigrins biosynthesis is performed by the hybrid PKS-NRPS synthetase pytA that condenses 4 malonyl-CoA units ato the acetyl starter unit by the modular PKS of pytA. The acyl chain is then connected to an L-serine through the amide bond by the modular NRPS of pytA. A tetramic acid is formed and released from the PKS-NRPS pytA to give pyranterreone 5 with the help of the thioesterase pytI. Pyranterreone 5 could be methylated by pytC to afford pyranterreone 6. Both pyranterreones 5 and 6 are subsequently oxidized by the FAD-linked oxidoreductase pytB and the cytochrome P450 monooxygenase pytD to form the fused gamma-pyrone core, resulting in pyranterreones 7 and 11, respectively. The hydroxy group at C-8 of pyranterreones 7 and 11 are dehydrated by the aspartyl protease pytH to form a delta-7 double bond to give pyranterreones 3 and 1, 2 accordingly. The exo-methylene of pyranterreone 3 could be reduced into a pendant methyl by reductase pytE to provide pyranterreone 4, also known as cordylactam. Pyranterreone 4 can be reconverted to pyranterreone 3 through pytB-catalyzed dehydrogenation or further oxidized to pyranterreones 9 and 10. The chain is Reductase pytE from Aspergillus terreus.